The following is a 39-amino-acid chain: Photosystem II reaction center protein L (39 aa).

The chain crosses the membrane as a helical span at residues S18–F38.

It belongs to the PsbL family. PSII is composed of 1 copy each of membrane proteins PsbA, PsbB, PsbC, PsbD, PsbE, PsbF, PsbH, PsbI, PsbJ, PsbK, PsbL, PsbM, PsbT, PsbX, PsbY, PsbZ, Psb30/Ycf12, peripheral proteins PsbO, CyanoQ (PsbQ), PsbU, PsbV and a large number of cofactors. It forms dimeric complexes.

It localises to the cellular thylakoid membrane. Functionally, one of the components of the core complex of photosystem II (PSII). PSII is a light-driven water:plastoquinone oxidoreductase that uses light energy to abstract electrons from H(2)O, generating O(2) and a proton gradient subsequently used for ATP formation. It consists of a core antenna complex that captures photons, and an electron transfer chain that converts photonic excitation into a charge separation. This subunit is found at the monomer-monomer interface and is required for correct PSII assembly and/or dimerization. The polypeptide is Photosystem II reaction center protein L (Synechococcus sp. (strain RCC307)).